The sequence spans 83 residues: Small ribosomal subunit protein bS16 (83 aa).

The protein belongs to the bacterial ribosomal protein bS16 family.

In Cupriavidus taiwanensis (strain DSM 17343 / BCRC 17206 / CCUG 44338 / CIP 107171 / LMG 19424 / R1) (Ralstonia taiwanensis (strain LMG 19424)), this protein is Small ribosomal subunit protein bS16.